A 136-amino-acid chain; its full sequence is Protein K5 (136 aa).

The protein belongs to the poxviridae K5 protein family.

This chain is Protein K5, found in Homo sapiens (Human).